The following is a 62-amino-acid chain: UPF0337 protein XAC0100 (62 aa).

This sequence belongs to the UPF0337 (CsbD) family.

In Xanthomonas axonopodis pv. citri (strain 306), this protein is UPF0337 protein XAC0100.